The chain runs to 314 residues: NF-kappa-B inhibitor alpha (314 aa).

The segment at Met-1–Glu-40 is disordered. Basic and acidic residues predominate over residues Gly-15–Glu-40. Lys-21 participates in a covalent cross-link: Glycyl lysine isopeptide (Lys-Gly) (interchain with G-Cter in SUMO); alternate. A Glycyl lysine isopeptide (Lys-Gly) (interchain with G-Cter in ubiquitin); alternate cross-link involves residue Lys-21. A Glycyl lysine isopeptide (Lys-Gly) (interchain with G-Cter in ubiquitin) cross-link involves residue Lys-22. The Destruction motif motif lies at His-30 to Ser-36. A Phosphoserine; by IKKB modification is found at Ser-32. Ser-36 bears the Phosphoserine; by IKKA, IKKB, IKKE and TBK1 mark. At Tyr-42 the chain carries Phosphotyrosine. The short motif at Met-45 to Leu-54 is the Nuclear export signal element. 5 ANK repeats span residues Asp-73–Phe-103, Leu-110–Leu-139, Arg-143–Leu-172, Asn-182–Ala-211, and Asn-216–Arg-245. Positions Leu-110–Ile-120 match the Nuclear import signal motif. (3S)-3-hydroxyasparagine; by HIF1AN occurs at positions 210 and 244. Ser-283 and Ser-288 each carry phosphoserine; by CK2. Position 291 is a phosphothreonine; by CK2 (Thr-291). Phosphoserine; by CK2 is present on Ser-293. A Phosphothreonine modification is found at Thr-296.

It belongs to the NF-kappa-B inhibitor family. As to quaternary structure, interacts with RELA; the interaction requires the nuclear import signal. Part of a 70-90 kDa complex at least consisting of CHUK, IKBKB, NFKBIA, RELA, ELP1 and MAP3K14. Interacts with NKIRAS1 and NKIRAS2. Interacts with RWDD3; the interaction enhances sumoylation. Interacts with PRMT2. Interacts with PRKACA in platelets; this interaction is disrupted by thrombin and collagen. Interacts with MEFV. Interacts with DDRGK1; positively regulates NFKBIA phosphorylation and degradation. Interacts with HNRNPA2B1; the interaction may be mediated by the RRM2 domain of HNRNPA2B1, and HNRNPA2B1 may interact simultaneously with FAM76B and either NFKBIA or NFKBIE to form a complex. In terms of processing, phosphorylated at Ser-32 and Ser-36 by IKKA/CHUK and IKKB/IKBKB; disables inhibition of NF-kappa-B DNA-binding activity. Phosphorylation at positions 32 and 36 is prerequisite to recognition by the SCF(FBXW11) and SCF(BTRC) complexes, leading to polyubiquitination and subsequent degradation. Polyubiquitinated at Lys-21 and/or Lys-22 following phosphorylation at Ser-32 and Ser-36. Monoubiquitinated at Lys-21 and/or Lys-22 by UBE2D3. Ubiquitin chain elongation is then performed by CDC34 in cooperation with the SCF(FBXW11) E3 ligase complex, building ubiquitin chains from the UBE2D3-primed NFKBIA-linked ubiquitin. The resulting polyubiquitination leads to protein degradation. Also ubiquitinated by the SCF(BTRC) complex following stimulus-dependent phosphorylation at Ser-32 and Ser-36. Deubiquitinated by USP38, leading to NF-kappa-B inhibition. Post-translationally, sumoylated; sumoylation requires the presence of the nuclear import signal. Sumoylation blocks ubiquitination and proteasome-mediated degradation of the protein thereby increasing the protein stability. In terms of processing, hydroxylated by HIF1AN. In terms of tissue distribution, highly expressed in lymph node, thymus followed by liver, brain, muscle, kidney, gastrointestinal and reproductive tract.

It localises to the cytoplasm. The protein resides in the nucleus. Inhibits the activity of dimeric NF-kappa-B/REL complexes by trapping REL (RELA/p65 and NFKB1/p50) dimers in the cytoplasm by masking their nuclear localization signals. On cellular stimulation by immune and pro-inflammatory responses, becomes phosphorylated promoting ubiquitination and degradation, enabling the dimeric RELA to translocate to the nucleus and activate transcription. This Mus musculus (Mouse) protein is NF-kappa-B inhibitor alpha (Nfkbia).